Here is a 741-residue protein sequence, read N- to C-terminus: uncharacterized protein (741 aa).

Residues 1 to 18 form the signal peptide; it reads MKTISILAFLVLARLIEA. Disordered stretches follow at residues 142 to 300, 423 to 528, and 646 to 681; these read PKVE…GNVD, EEDE…SEQG, and ETVA…VEDD. Positions 147 to 165 are enriched in acidic residues; it reads EEEEEEYDGEEDDDDESLT. Composition is skewed to low complexity over residues 183–197 and 205–266; these read VEPS…STTE and STTV…SSTT. Asn232 and Asn241 each carry an N-linked (GlcNAc...) asparagine glycan. The segment covering 423-432 has biased composition (acidic residues); sequence EEDEIDETET. A compositionally biased stretch (low complexity) spans 433–451; the sequence is TESTKTTETTKTTGPAETT. N-linked (GlcNAc...) asparagine glycosylation is found at Asn461 and Asn511. Over residues 500 to 511 the composition is skewed to acidic residues; it reads PIDESTESEEPN. Residues 512–528 show a composition bias toward low complexity; it reads ESVTVTGDTTTDTSEQG. Positions 646 to 656 are enriched in polar residues; sequence ETVAPDTNSPD. Over residues 657-671 the composition is skewed to acidic residues; sequence ADQEQPDSVEPDNET. Residue Asn669 is glycosylated (N-linked (GlcNAc...) asparagine). Asn719 is lipidated: GPI-anchor amidated asparagine. Positions 720–741 are cleaved as a propeptide — removed in mature form; it reads AANLAGSISLSSGVLLLILMLI.

It localises to the cell membrane. This is an uncharacterized protein from Candida albicans (strain SC5314 / ATCC MYA-2876) (Yeast).